A 229-amino-acid chain; its full sequence is Putative N-acetylmannosamine-6-phosphate 2-epimerase (229 aa).

It belongs to the NanE family.

It catalyses the reaction an N-acyl-D-glucosamine 6-phosphate = an N-acyl-D-mannosamine 6-phosphate. Its pathway is amino-sugar metabolism; N-acetylneuraminate degradation; D-fructose 6-phosphate from N-acetylneuraminate: step 3/5. Converts N-acetylmannosamine-6-phosphate (ManNAc-6-P) to N-acetylglucosamine-6-phosphate (GlcNAc-6-P). The chain is Putative N-acetylmannosamine-6-phosphate 2-epimerase from Escherichia fergusonii (strain ATCC 35469 / DSM 13698 / CCUG 18766 / IAM 14443 / JCM 21226 / LMG 7866 / NBRC 102419 / NCTC 12128 / CDC 0568-73).